The sequence spans 263 residues: Troponin T, fast skeletal muscle isoforms (263 aa).

Positions M1–E26 are enriched in acidic residues. 3 disordered regions span residues M1–I66, R107–E188, and D243–K263. S2 is modified (N-acetylserine). Composition is skewed to basic and acidic residues over residues P56 to I66, R107 to K149, and T177 to E188. The span at K247–K263 shows a compositional bias: basic residues.

This sequence belongs to the troponin T family.

Troponin T is the tropomyosin-binding subunit of troponin, the thin filament regulatory complex which confers calcium-sensitivity to striated muscle actomyosin ATPase activity. The sequence is that of Troponin T, fast skeletal muscle isoforms (TNNT3) from Gallus gallus (Chicken).